A 728-amino-acid chain; its full sequence is Polyribonucleotide nucleotidyltransferase (728 aa).

Mg(2+) is bound by residues Asp488 and Asp494. Positions 555–614 (PRMITMKIHPDKIREVIGKGGSTIQALTKETGTTIDIQEDGTITIASTSTDGMAEAKRRI) constitute a KH domain. Positions 624–692 (GKIYNGTVLK…EKGRLRLSLK (69 aa)) constitute an S1 motif domain. Residues 702–728 (ISPVNAGEAAPAPAPAAAPATPSDQQQ) are disordered. A compositionally biased stretch (low complexity) spans 710-721 (AAPAPAPAAAPA).

Belongs to the polyribonucleotide nucleotidyltransferase family. Mg(2+) serves as cofactor.

Its subcellular location is the cytoplasm. The catalysed reaction is RNA(n+1) + phosphate = RNA(n) + a ribonucleoside 5'-diphosphate. In terms of biological role, involved in mRNA degradation. Catalyzes the phosphorolysis of single-stranded polyribonucleotides processively in the 3'- to 5'-direction. This chain is Polyribonucleotide nucleotidyltransferase, found in Cupriavidus pinatubonensis (strain JMP 134 / LMG 1197) (Cupriavidus necator (strain JMP 134)).